The sequence spans 314 residues: tRNA dimethylallyltransferase (314 aa).

8-15 (GPTGAGKS) provides a ligand contact to ATP. Residue 10–15 (TGAGKS) participates in substrate binding.

It belongs to the IPP transferase family. In terms of assembly, monomer. Requires Mg(2+) as cofactor.

It carries out the reaction adenosine(37) in tRNA + dimethylallyl diphosphate = N(6)-dimethylallyladenosine(37) in tRNA + diphosphate. Functionally, catalyzes the transfer of a dimethylallyl group onto the adenine at position 37 in tRNAs that read codons beginning with uridine, leading to the formation of N6-(dimethylallyl)adenosine (i(6)A). The chain is tRNA dimethylallyltransferase from Mycobacterium tuberculosis (strain ATCC 25177 / H37Ra).